A 554-amino-acid polypeptide reads, in one-letter code: CTP synthase (554 aa).

Residues 1-279 (MTSSRKVRPT…DTFIIRRLGL (279 aa)) form an amidoligase domain region. CTP is bound at residue S21. S21 contacts UTP. ATP contacts are provided by residues 22-27 (SLGKGL) and D79. Mg(2+)-binding residues include D79 and E153. CTP is bound by residues 160–162 (DIE), 200–205 (KTKPTQ), and K236. UTP is bound by residues 200–205 (KTKPTQ) and K236. The region spanning 304–553 (TVGIVGKYID…VKTALELRVH (250 aa)) is the Glutamine amidotransferase type-1 domain. Residue G367 participates in L-glutamine binding. The active-site Nucleophile; for glutamine hydrolysis is C394. L-glutamine is bound by residues 395 to 398 (LGLQ), E417, and R478. Active-site residues include H526 and E528.

Belongs to the CTP synthase family. Homotetramer.

It carries out the reaction UTP + L-glutamine + ATP + H2O = CTP + L-glutamate + ADP + phosphate + 2 H(+). It catalyses the reaction L-glutamine + H2O = L-glutamate + NH4(+). The catalysed reaction is UTP + NH4(+) + ATP = CTP + ADP + phosphate + 2 H(+). It functions in the pathway pyrimidine metabolism; CTP biosynthesis via de novo pathway; CTP from UDP: step 2/2. With respect to regulation, allosterically activated by GTP, when glutamine is the substrate; GTP has no effect on the reaction when ammonia is the substrate. The allosteric effector GTP functions by stabilizing the protein conformation that binds the tetrahedral intermediate(s) formed during glutamine hydrolysis. Inhibited by the product CTP, via allosteric rather than competitive inhibition. In terms of biological role, catalyzes the ATP-dependent amination of UTP to CTP with either L-glutamine or ammonia as the source of nitrogen. Regulates intracellular CTP levels through interactions with the four ribonucleotide triphosphates. The protein is CTP synthase of Corynebacterium glutamicum (strain R).